Reading from the N-terminus, the 778-residue chain is LPS-assembly protein LptD (778 aa).

The N-terminal stretch at 1 to 23 (MKTRYSVLSVAMTAAFYTQYAQA) is a signal peptide.

The protein belongs to the LptD family. As to quaternary structure, component of the lipopolysaccharide transport and assembly complex. Interacts with LptE and LptA.

It is found in the cell outer membrane. Functionally, together with LptE, is involved in the assembly of lipopolysaccharide (LPS) at the surface of the outer membrane. This is LPS-assembly protein LptD from Actinobacillus pleuropneumoniae serotype 7 (strain AP76).